A 425-amino-acid polypeptide reads, in one-letter code: Serine--tRNA ligase (425 aa).

231-233 is an L-serine binding site; sequence TAE. 262–264 contacts ATP; it reads RRE. Glutamate 285 contributes to the L-serine binding site. Residue 349-352 participates in ATP binding; that stretch reads EISS. Residue serine 385 participates in L-serine binding.

The protein belongs to the class-II aminoacyl-tRNA synthetase family. Type-1 seryl-tRNA synthetase subfamily. As to quaternary structure, homodimer. The tRNA molecule binds across the dimer.

Its subcellular location is the cytoplasm. The enzyme catalyses tRNA(Ser) + L-serine + ATP = L-seryl-tRNA(Ser) + AMP + diphosphate + H(+). It carries out the reaction tRNA(Sec) + L-serine + ATP = L-seryl-tRNA(Sec) + AMP + diphosphate + H(+). The protein operates within aminoacyl-tRNA biosynthesis; selenocysteinyl-tRNA(Sec) biosynthesis; L-seryl-tRNA(Sec) from L-serine and tRNA(Sec): step 1/1. Catalyzes the attachment of serine to tRNA(Ser). Is also able to aminoacylate tRNA(Sec) with serine, to form the misacylated tRNA L-seryl-tRNA(Sec), which will be further converted into selenocysteinyl-tRNA(Sec). The protein is Serine--tRNA ligase of Aquifex aeolicus (strain VF5).